A 117-amino-acid polypeptide reads, in one-letter code: Immunoglobulin kappa variable 1-9 (117 aa).

The N-terminal stretch at 1–22 is a signal peptide; it reads MDMRVPAQLLGLLLLWLPGARC. Residues 23-45 form a framework-1 region; that stretch reads DIQLTQSPSFLSASVGDRVTITC. Positions 24 to 117 constitute an Ig-like domain; that stretch reads IQLTQSPSFL…YYCQQLNSYP (94 aa). The cysteines at positions 45 and 110 are disulfide-linked. Residues 46–56 form a complementarity-determining-1 region; sequence RASQGISSYLA. The interval 57 to 71 is framework-2; sequence WYQQKPGKAPKLLIY. The tract at residues 72 to 78 is complementarity-determining-2; sequence AASTLQS. The framework-3 stretch occupies residues 79–110; it reads GVPSRFSGSGSGTEFTLTISSLQPEDFATYYC. The interval 111 to 117 is complementarity-determining-3; it reads QQLNSYP.

As to quaternary structure, immunoglobulins are composed of two identical heavy chains and two identical light chains; disulfide-linked.

It is found in the secreted. It localises to the cell membrane. V region of the variable domain of immunoglobulin light chains that participates in the antigen recognition. Immunoglobulins, also known as antibodies, are membrane-bound or secreted glycoproteins produced by B lymphocytes. In the recognition phase of humoral immunity, the membrane-bound immunoglobulins serve as receptors which, upon binding of a specific antigen, trigger the clonal expansion and differentiation of B lymphocytes into immunoglobulins-secreting plasma cells. Secreted immunoglobulins mediate the effector phase of humoral immunity, which results in the elimination of bound antigens. The antigen binding site is formed by the variable domain of one heavy chain, together with that of its associated light chain. Thus, each immunoglobulin has two antigen binding sites with remarkable affinity for a particular antigen. The variable domains are assembled by a process called V-(D)-J rearrangement and can then be subjected to somatic hypermutations which, after exposure to antigen and selection, allow affinity maturation for a particular antigen. The polypeptide is Immunoglobulin kappa variable 1-9 (Homo sapiens (Human)).